The following is a 240-amino-acid chain: Regulatory protein RecX (240 aa).

Belongs to the RecX family.

The protein localises to the cytoplasm. Modulates RecA activity. The sequence is that of Regulatory protein RecX from Lacticaseibacillus paracasei (strain ATCC 334 / BCRC 17002 / CCUG 31169 / CIP 107868 / KCTC 3260 / NRRL B-441) (Lactobacillus paracasei).